The primary structure comprises 123 residues: MKRQKRKQSITLIEMMVVITLIGIIGGALAFNMRGSIHKGKVFQSEQNCAKVYDILMMEYATGGSSLKEIIAHKETVVEEASWCKEGRKLLKDAWGEDLIVQLNDKGDDLVIFSKRVQSSNKK.

Positions 1–30 (MKRQKRKQSITLIEMMVVITLIGIIGGALA) are cleaved as a signal peptide.

Its subcellular location is the cell outer membrane. In Chlamydia pneumoniae (Chlamydophila pneumoniae), this protein is Putative outer membrane protein CPn_0818/CP_1053/CPj0818/CpB0847.